Consider the following 447-residue polypeptide: Methylenetetrahydrofolate--tRNA-(uracil-5-)-methyltransferase TrmFO (447 aa).

Residue 8-13 (GGGLAG) coordinates FAD. The disordered stretch occupies residues 398–421 (NWGLVPAPPKRENGRRLGRQERRR). A compositionally biased stretch (basic and acidic residues) spans 406–417 (PKRENGRRLGRQ).

The protein belongs to the MnmG family. TrmFO subfamily. FAD serves as cofactor.

Its subcellular location is the cytoplasm. It carries out the reaction uridine(54) in tRNA + (6R)-5,10-methylene-5,6,7,8-tetrahydrofolate + NADH + H(+) = 5-methyluridine(54) in tRNA + (6S)-5,6,7,8-tetrahydrofolate + NAD(+). The catalysed reaction is uridine(54) in tRNA + (6R)-5,10-methylene-5,6,7,8-tetrahydrofolate + NADPH + H(+) = 5-methyluridine(54) in tRNA + (6S)-5,6,7,8-tetrahydrofolate + NADP(+). Functionally, catalyzes the folate-dependent formation of 5-methyl-uridine at position 54 (M-5-U54) in all tRNAs. This Rubrobacter xylanophilus (strain DSM 9941 / JCM 11954 / NBRC 16129 / PRD-1) protein is Methylenetetrahydrofolate--tRNA-(uracil-5-)-methyltransferase TrmFO.